The primary structure comprises 57 residues: UPF0391 membrane protein Arad_3976 (57 aa).

Helical transmembrane passes span 4–24 (WAII…SGVS) and 33–53 (VLFA…VMAG).

Belongs to the UPF0391 family.

It localises to the cell membrane. The chain is UPF0391 membrane protein Arad_3976 from Rhizobium rhizogenes (strain K84 / ATCC BAA-868) (Agrobacterium radiobacter).